A 279-amino-acid polypeptide reads, in one-letter code: Protein NipSnap homolog 1 (279 aa).

This sequence belongs to the NipSnap family.

The protein resides in the mitochondrion matrix. In terms of biological role, protein involved in mitophagy. Accumulates on the mitochondria surface in response to mitochondrial depolarization and acts as a 'eat me' signal by recruiting proteins involved in selective autophagy. The polypeptide is Protein NipSnap homolog 1 (Danio rerio (Zebrafish)).